The primary structure comprises 438 residues: Adenylosuccinate synthetase (438 aa).

Residues 13 to 19 and 41 to 43 each bind GTP; these read GDEGKGK and GHT. Catalysis depends on aspartate 14, which acts as the Proton acceptor. Mg(2+) contacts are provided by aspartate 14 and glycine 41. IMP-binding positions include 14–17, 39–42, threonine 130, arginine 144, glutamine 225, threonine 240, and arginine 312; these read DEGK and NAGH. Histidine 42 functions as the Proton donor in the catalytic mechanism. Substrate is bound at residue 308-314; it reads ATTGRQR. GTP-binding positions include arginine 314, 340–342, and 422–424; these read KLD and STG.

Belongs to the adenylosuccinate synthetase family. As to quaternary structure, homodimer. Mg(2+) serves as cofactor.

It is found in the cytoplasm. It catalyses the reaction IMP + L-aspartate + GTP = N(6)-(1,2-dicarboxyethyl)-AMP + GDP + phosphate + 2 H(+). It functions in the pathway purine metabolism; AMP biosynthesis via de novo pathway; AMP from IMP: step 1/2. Its function is as follows. Plays an important role in the de novo pathway of purine nucleotide biosynthesis. Catalyzes the first committed step in the biosynthesis of AMP from IMP. In Ruthia magnifica subsp. Calyptogena magnifica, this protein is Adenylosuccinate synthetase.